A 129-amino-acid chain; its full sequence is Small ribosomal subunit protein uS11 (129 aa).

It belongs to the universal ribosomal protein uS11 family. In terms of assembly, part of the 30S ribosomal subunit. Interacts with proteins S7 and S18. Binds to IF-3.

Located on the platform of the 30S subunit, it bridges several disparate RNA helices of the 16S rRNA. Forms part of the Shine-Dalgarno cleft in the 70S ribosome. The chain is Small ribosomal subunit protein uS11 from Francisella tularensis subsp. holarctica (strain FTNF002-00 / FTA).